A 216-amino-acid chain; its full sequence is MALYRPLLLHHPTSPSVTTFLRNYPSKPIKFSSLPFLHRCRKSRVSSSSARCCSSMESPPEGYRRNVGVCLMNSSKKIFTASRLDIPSAWQMPQGGIDEGEDPRVAVMRELKEETGVHSAEILAEAPHWITYDFPPDVREKLKVRWGSDWKGQAQKWFLLKFTGKDEEINLLGDGTEKPEFGEWSWTSPDQVVENAVEFKKPVYKEVMSAFASHLQ.

A chloroplast-targeting transit peptide spans 1-53 (MALYRPLLLHHPTSPSVTTFLRNYPSKPIKFSSLPFLHRCRKSRVSSSSARCC). The region spanning 62–209 (GYRRNVGVCL…KKPVYKEVMS (148 aa)) is the Nudix hydrolase domain. The Nudix box signature appears at 95–116 (GGIDEGEDPRVAVMRELKEETG). Mn(2+)-binding residues include glutamate 110 and glutamate 114.

It belongs to the Nudix hydrolase family. Mg(2+) is required as a cofactor. It depends on Mn(2+) as a cofactor. In terms of tissue distribution, expressed in roots, leaves, stems and inflorescences.

It is found in the plastid. It localises to the chloroplast. In terms of biological role, mediates the hydrolysis of some nucleoside diphosphate derivatives. Can use diadenosine 5',5'''-P(1)P(5) pentaphosphate (Ap(5)A), diadenosine 5',5'''-P(1)P(4) tetraphosphate (Ap(4)A) and diadenosine 5',5'''-P(1)P(3) triphosphate (Ap(3)A) as substrates. This is Nudix hydrolase 26, chloroplastic (NUDT26) from Arabidopsis thaliana (Mouse-ear cress).